The primary structure comprises 156 residues: Snaclec trimecetin subunit alpha (156 aa).

Positions 1–23 (MGRFIFVSFGLLVVFLSLSGTGA) are cleaved as a signal peptide. 3 cysteine pairs are disulfide-bonded: C25–C36, C53–C150, and C125–C142. The region spanning 32–151 (FRRYCYKPFK…CGERNLFMCK (120 aa)) is the C-type lectin domain.

Belongs to the snaclec family. In terms of assembly, heterodimer of subunits alpha and beta; disulfide-linked. As to expression, expressed by the venom gland.

Its subcellular location is the secreted. Its function is as follows. Snaclec that induces platelet aggregation in either human platelet rich plasma (PRP) or washed platelet suspensions. It causes aggregation in a dose-dependent manner even in the absence of various platelet agonists such as ADP or von Willebrand factor (vWF). Interestingly, it does not induce aggregation in rabbit PRP. A monoclonal antibody against the platelet GPIb receptor blocks the aggregation induced by trimecetin, suggesting that it acts by binding to GPIb (GP1BA/GP1BB). In Protobothrops mucrosquamatus (Taiwan habu), this protein is Snaclec trimecetin subunit alpha.